We begin with the raw amino-acid sequence, 65 residues long: Sec-independent protein translocase protein TatA (65 aa).

The chain crosses the membrane as a helical span at residues Ile9–Gly29. The tract at residues Ser43–Glu65 is disordered. Positions Gly45–Thr54 are enriched in acidic residues. Residues Lys55 to Glu65 are compositionally biased toward basic and acidic residues.

Belongs to the TatA/E family. Forms a complex with TatC.

It is found in the cell membrane. Functionally, part of the twin-arginine translocation (Tat) system that transports large folded proteins containing a characteristic twin-arginine motif in their signal peptide across membranes. TatA could form the protein-conducting channel of the Tat system. The protein is Sec-independent protein translocase protein TatA of Dehalococcoides mccartyi (strain ATCC BAA-2266 / KCTC 15142 / 195) (Dehalococcoides ethenogenes (strain 195)).